Reading from the N-terminus, the 245-residue chain is 1-(5-phosphoribosyl)-5-[(5-phosphoribosylamino)methylideneamino] imidazole-4-carboxamide isomerase (245 aa).

The active-site Proton acceptor is aspartate 13. Catalysis depends on aspartate 132, which acts as the Proton donor.

The protein belongs to the HisA/HisF family.

Its subcellular location is the cytoplasm. It carries out the reaction 1-(5-phospho-beta-D-ribosyl)-5-[(5-phospho-beta-D-ribosylamino)methylideneamino]imidazole-4-carboxamide = 5-[(5-phospho-1-deoxy-D-ribulos-1-ylimino)methylamino]-1-(5-phospho-beta-D-ribosyl)imidazole-4-carboxamide. Its pathway is amino-acid biosynthesis; L-histidine biosynthesis; L-histidine from 5-phospho-alpha-D-ribose 1-diphosphate: step 4/9. The protein is 1-(5-phosphoribosyl)-5-[(5-phosphoribosylamino)methylideneamino] imidazole-4-carboxamide isomerase of Frankia alni (strain DSM 45986 / CECT 9034 / ACN14a).